We begin with the raw amino-acid sequence, 80 residues long: Large ribosomal subunit protein uL24 (80 aa).

The tract at residues 53–80 is disordered; it reads HMRPTQSNPQGSIIEREFPIHASNVKKS.

It belongs to the universal ribosomal protein uL24 family. As to quaternary structure, part of the 50S ribosomal subunit.

Its function is as follows. One of two assembly initiator proteins, it binds directly to the 5'-end of the 23S rRNA, where it nucleates assembly of the 50S subunit. One of the proteins that surrounds the polypeptide exit tunnel on the outside of the subunit. The protein is Large ribosomal subunit protein uL24 of Chlorobium luteolum (strain DSM 273 / BCRC 81028 / 2530) (Pelodictyon luteolum).